We begin with the raw amino-acid sequence, 228 residues long: Protein ULTRAPETALA 2 (228 aa).

Positions 14–121 constitute an SAND domain; sequence EELQEISGVH…NKALKNSNVS (108 aa).

Expressed in influorescence, pollen and siliques, with a higher expression in influorescence.

Its subcellular location is the cytoplasm. The protein resides in the nucleus. Its function is as follows. Putative transcription factor that acts as a key negative regulator of cell accumulation in shoot and floral meristems. Negatively regulates the size of the WUSCHEL (WUS)-expressing organizing center in inflorescence meristems. May act by down-regulating expression of WUS. Can compensate for mutant ULT1 protein when overexpressed. The protein is Protein ULTRAPETALA 2 (ULT2) of Arabidopsis thaliana (Mouse-ear cress).